The primary structure comprises 356 residues: Trans-enoyl reductase pgmF (356 aa).

NADP(+) contacts are provided by residues 57–60 (VDFK), 175–178 (SGGC), 198–201 (STPN), Y216, 261–262 (VG), and 342–343 (AK).

This sequence belongs to the zinc-containing alcohol dehydrogenase family.

Functionally, FAD-linked oxidoreductase; part of the gene cluster that mediates the biosynthesis of pleosporalin A, ascomycone A, as well as a third cryptic naphthoquinone derived pigment, all responsible for the coloration of conidia. The pathway begins with the biosynthesis of the cyclized heptaketide 3-acetonyl-1,6,8-trihydroxy-2-naphthaldehyde by the NR-PKS pgmA. The C-6 hydroxyl group is further methylated by the O-methyltransferase pgmB to yield fusarubinaldehyde which is in turn oxidized by the cytochrome P450 monooxygenase pgmC at C-9. The C-1 hydroxyl group is then methylated spontaneously. Although pgmE, pgmD and pgmH are essential for the production of pleosporalin A, it is not the case for the 2 other final products and it remains difficult to assign a specific function to each enzyme. PgmF and pgmG seem not to be involved in pigment biosynthesis although they were regulated by the cluster-specific transcription factor pgmR. The chain is Trans-enoyl reductase pgmF from Aspergillus terreus (strain NIH 2624 / FGSC A1156).